The chain runs to 85 residues: MAHKKGGGSSRNGRDSNAQRRGVKVYAGAPVRAGNILVRQVGSSIHAGHNVGTGRDFTLFALVDGVVTYEWKSNTKKQVSVYPAS.

The segment at 1–22 (MAHKKGGGSSRNGRDSNAQRRG) is disordered.

This sequence belongs to the bacterial ribosomal protein bL27 family.

The protein is Large ribosomal subunit protein bL27 of Sorangium cellulosum (strain So ce56) (Polyangium cellulosum (strain So ce56)).